The following is a 201-amino-acid chain: Retinol-binding protein 4 (201 aa).

Positions 1–18 (MEWVWALVLLAALGGGSA) are cleaved as a signal peptide. 3 disulfide bridges follow: Cys22-Cys178, Cys88-Cys192, and Cys138-Cys147. Gln116 provides a ligand contact to substrate. Position 139 is an omega-N-methylarginine (Arg139).

The protein belongs to the calycin superfamily. Lipocalin family. In terms of assembly, interacts with TTR. Interaction with TTR prevents its loss by filtration through the kidney glomeruli. Interacts with STRA6. In terms of tissue distribution, detected in blood plasma (at protein level).

The protein resides in the secreted. Its function is as follows. Retinol-binding protein that mediates retinol transport in blood plasma. Delivers retinol from the liver stores to the peripheral tissues. Transfers the bound all-trans retinol to STRA6, that then facilitates retinol transport across the cell membrane. The chain is Retinol-binding protein 4 (Rbp4) from Rattus norvegicus (Rat).